A 247-amino-acid polypeptide reads, in one-letter code: MSKLFWAMLAFISRLPVPSRWSQGLDFEQYSRGIVMFPFIGLILGGVSGLIFILLQSWCGIPLAALFCILALALLTGGFHLDGLADTCDGIFSARRRERMLEIMRDSRLGTHGGLALIFVLLAKILVVSELALRGTPMLAALAAACAAGRGSAVLLMYHHRYARDEGLGNVFIGKVSGRQTCITLGLAVIVATVLLPGMQGLAAMVVTLAAIFILGQLLKRTLGGQTGDTLGAAIELGELIFLLALL.

6 consecutive transmembrane segments (helical) span residues 34–54, 59–79, 113–133, 138–158, 171–191, and 194–214; these read IVMF…IFIL, CGIP…TGGF, GGLA…ELAL, MLAA…LLMY, VFIG…AVIV, and VLLP…AIFI.

It belongs to the CobS family. Mg(2+) is required as a cofactor.

It is found in the cell inner membrane. It catalyses the reaction alpha-ribazole + adenosylcob(III)inamide-GDP = adenosylcob(III)alamin + GMP + H(+). The enzyme catalyses alpha-ribazole 5'-phosphate + adenosylcob(III)inamide-GDP = adenosylcob(III)alamin 5'-phosphate + GMP + H(+). Its pathway is cofactor biosynthesis; adenosylcobalamin biosynthesis; adenosylcobalamin from cob(II)yrinate a,c-diamide: step 7/7. Functionally, joins adenosylcobinamide-GDP and alpha-ribazole to generate adenosylcobalamin (Ado-cobalamin). Also synthesizes adenosylcobalamin 5'-phosphate from adenosylcobinamide-GDP and alpha-ribazole 5'-phosphate. The chain is Adenosylcobinamide-GDP ribazoletransferase from Salmonella schwarzengrund (strain CVM19633).